The sequence spans 114 residues: Holo-[acyl-carrier-protein] synthase (114 aa).

Mg(2+) contacts are provided by Asp-8 and Glu-58.

The protein belongs to the P-Pant transferase superfamily. AcpS family. Mg(2+) is required as a cofactor.

It localises to the cytoplasm. It catalyses the reaction apo-[ACP] + CoA = holo-[ACP] + adenosine 3',5'-bisphosphate + H(+). In terms of biological role, transfers the 4'-phosphopantetheine moiety from coenzyme A to a Ser of acyl-carrier-protein. The sequence is that of Holo-[acyl-carrier-protein] synthase from Mycoplasma genitalium (strain ATCC 33530 / DSM 19775 / NCTC 10195 / G37) (Mycoplasmoides genitalium).